We begin with the raw amino-acid sequence, 218 residues long: Peptide methionine sulfoxide reductase MsrA (218 aa).

The active site involves cysteine 57.

It belongs to the MsrA Met sulfoxide reductase family.

It catalyses the reaction L-methionyl-[protein] + [thioredoxin]-disulfide + H2O = L-methionyl-(S)-S-oxide-[protein] + [thioredoxin]-dithiol. It carries out the reaction [thioredoxin]-disulfide + L-methionine + H2O = L-methionine (S)-S-oxide + [thioredoxin]-dithiol. Its function is as follows. Has an important function as a repair enzyme for proteins that have been inactivated by oxidation. Catalyzes the reversible oxidation-reduction of methionine sulfoxide in proteins to methionine. In Brucella melitensis biotype 1 (strain ATCC 23456 / CCUG 17765 / NCTC 10094 / 16M), this protein is Peptide methionine sulfoxide reductase MsrA.